Here is a 159-residue protein sequence, read N- to C-terminus: Phosphopantetheine adenylyltransferase (159 aa).

Threonine 10 serves as a coordination point for substrate. ATP is bound by residues 10–11 (TF) and histidine 18. Lysine 42, methionine 74, and arginine 88 together coordinate substrate. Residues 89–91 (GLR), glutamate 99, and 124–130 (WSFISSS) each bind ATP.

This sequence belongs to the bacterial CoaD family. As to quaternary structure, homohexamer. Mg(2+) serves as cofactor.

It localises to the cytoplasm. It carries out the reaction (R)-4'-phosphopantetheine + ATP + H(+) = 3'-dephospho-CoA + diphosphate. It participates in cofactor biosynthesis; coenzyme A biosynthesis; CoA from (R)-pantothenate: step 4/5. Its function is as follows. Reversibly transfers an adenylyl group from ATP to 4'-phosphopantetheine, yielding dephospho-CoA (dPCoA) and pyrophosphate. This Klebsiella pneumoniae subsp. pneumoniae (strain ATCC 700721 / MGH 78578) protein is Phosphopantetheine adenylyltransferase.